The sequence spans 527 residues: Peptide chain release factor 3 (527 aa).

Positions 11–278 constitute a tr-type G domain; the sequence is AKRRTFAIIS…GFVEWAPPPL (268 aa). GTP contacts are provided by residues 20–27, 87–91, and 141–144; these read SHPDAGKT, DTPGH, and NKMD.

Belongs to the TRAFAC class translation factor GTPase superfamily. Classic translation factor GTPase family. PrfC subfamily.

It localises to the cytoplasm. Functionally, increases the formation of ribosomal termination complexes and stimulates activities of RF-1 and RF-2. It binds guanine nucleotides and has strong preference for UGA stop codons. It may interact directly with the ribosome. The stimulation of RF-1 and RF-2 is significantly reduced by GTP and GDP, but not by GMP. This Saccharophagus degradans (strain 2-40 / ATCC 43961 / DSM 17024) protein is Peptide chain release factor 3.